The sequence spans 59 residues: UPF0434 protein Noc_2677 (59 aa).

Belongs to the UPF0434 family.

The protein is UPF0434 protein Noc_2677 of Nitrosococcus oceani (strain ATCC 19707 / BCRC 17464 / JCM 30415 / NCIMB 11848 / C-107).